A 311-amino-acid polypeptide reads, in one-letter code: Aspartate carbamoyltransferase catalytic subunit (311 aa).

Carbamoyl phosphate-binding residues include R58 and T59. Position 86 (K86) interacts with L-aspartate. Residues R108, H136, and Q139 each contribute to the carbamoyl phosphate site. L-aspartate-binding residues include R169 and R224. Positions 265 and 266 each coordinate carbamoyl phosphate.

This sequence belongs to the aspartate/ornithine carbamoyltransferase superfamily. ATCase family. Heterododecamer (2C3:3R2) of six catalytic PyrB chains organized as two trimers (C3), and six regulatory PyrI chains organized as three dimers (R2).

It carries out the reaction carbamoyl phosphate + L-aspartate = N-carbamoyl-L-aspartate + phosphate + H(+). The protein operates within pyrimidine metabolism; UMP biosynthesis via de novo pathway; (S)-dihydroorotate from bicarbonate: step 2/3. Its function is as follows. Catalyzes the condensation of carbamoyl phosphate and aspartate to form carbamoyl aspartate and inorganic phosphate, the committed step in the de novo pyrimidine nucleotide biosynthesis pathway. This is Aspartate carbamoyltransferase catalytic subunit from Geobacter sulfurreducens (strain ATCC 51573 / DSM 12127 / PCA).